We begin with the raw amino-acid sequence, 456 residues long: Adenylosuccinate lyase (456 aa).

N(6)-(1,2-dicarboxyethyl)-AMP contacts are provided by residues arginine 15–tyrosine 16, asparagine 90–aspartate 92, and threonine 122–serine 123. Histidine 171 acts as the Proton donor/acceptor in catalysis. Glutamine 247 is a binding site for N(6)-(1,2-dicarboxyethyl)-AMP. The active-site Proton donor/acceptor is the serine 295. N(6)-(1,2-dicarboxyethyl)-AMP is bound by residues serine 296, lysine 301–asparagine 303, asparagine 309, arginine 335, and serine 340–arginine 344.

This sequence belongs to the lyase 1 family. Adenylosuccinate lyase subfamily. In terms of assembly, homotetramer. Residues from neighboring subunits contribute catalytic and substrate-binding residues to each active site.

It carries out the reaction N(6)-(1,2-dicarboxyethyl)-AMP = fumarate + AMP. It catalyses the reaction (2S)-2-[5-amino-1-(5-phospho-beta-D-ribosyl)imidazole-4-carboxamido]succinate = 5-amino-1-(5-phospho-beta-D-ribosyl)imidazole-4-carboxamide + fumarate. It functions in the pathway purine metabolism; AMP biosynthesis via de novo pathway; AMP from IMP: step 2/2. The protein operates within purine metabolism; IMP biosynthesis via de novo pathway; 5-amino-1-(5-phospho-D-ribosyl)imidazole-4-carboxamide from 5-amino-1-(5-phospho-D-ribosyl)imidazole-4-carboxylate: step 2/2. Functionally, catalyzes two reactions in de novo purine nucleotide biosynthesis. Catalyzes the breakdown of 5-aminoimidazole- (N-succinylocarboxamide) ribotide (SAICAR or 2-[5-amino-1-(5-phospho-beta-D-ribosyl)imidazole-4-carboxamido]succinate) to 5-aminoimidazole-4-carboxamide ribotide (AICAR or 5-amino-1-(5-phospho-beta-D-ribosyl)imidazole-4-carboxamide) and fumarate, and of adenylosuccinate (ADS or N(6)-(1,2-dicarboxyethyl)-AMP) to adenosine monophosphate (AMP) and fumarate. The sequence is that of Adenylosuccinate lyase (purB) from Legionella pneumophila (strain Corby).